We begin with the raw amino-acid sequence, 609 residues long: Phosphoenolpyruvate carboxykinase [GTP] (609 aa).

Residues arginine 81 and 220-222 (YGG) contribute to the substrate site. Mn(2+)-binding residues include lysine 229 and histidine 249. Position 271 (serine 271) interacts with substrate. 272 to 277 (ACGKTN) contacts GTP. Cysteine 273 is a catalytic residue. Residue aspartate 296 coordinates Mn(2+). 387-389 (NSR) lines the substrate pocket. Residues arginine 389, arginine 420, and 515–518 (FGEN) each bind GTP.

It belongs to the phosphoenolpyruvate carboxykinase [GTP] family. As to quaternary structure, monomer. The cofactor is Mn(2+).

The protein resides in the cytoplasm. The catalysed reaction is oxaloacetate + GTP = phosphoenolpyruvate + GDP + CO2. Its pathway is carbohydrate biosynthesis; gluconeogenesis. Its function is as follows. Catalyzes the conversion of oxaloacetate (OAA) to phosphoenolpyruvate (PEP), the rate-limiting step in the metabolic pathway that produces glucose from lactate and other precursors derived from the citric acid cycle. The sequence is that of Phosphoenolpyruvate carboxykinase [GTP] from Mycobacterium ulcerans (strain Agy99).